Consider the following 353-residue polypeptide: N-methyltransferase (353 aa).

S-adenosyl-L-homocysteine is bound by residues serine 171, alanine 195, aspartate 218, aspartate 238, and lysine 252. Aspartate 218 lines the S-adenosyl-L-methionine pocket.

It belongs to the class I-like SAM-binding methyltransferase superfamily. Cation-independent O-methyltransferase family. In terms of assembly, homodimer. In terms of tissue distribution, expressed at high levels in all tissues.

The catalysed reaction is 3-methoxytyramine + S-adenosyl-L-methionine = N-methyl-3-methoxytyramine + S-adenosyl-L-homocysteine + H(+). It catalyses the reaction mescaline + S-adenosyl-L-methionine = N-methylmescaline + S-adenosyl-L-homocysteine + H(+). It carries out the reaction tyramine + S-adenosyl-L-methionine = N-methyltyramine + S-adenosyl-L-homocysteine + H(+). The enzyme catalyses 4-hydroxy-3,5-dimethoxyphenethylamine + S-adenosyl-L-methionine = N-methyl-4-hydroxy-3,5-dimethoxyphenethylamine + S-adenosyl-L-homocysteine + H(+). It functions in the pathway aromatic compound metabolism. It participates in alkaloid biosynthesis. N-methyltransferase participating in the biosynthesis of natural products derived from phenylethylamine, including mescaline, a natural hallucinogen potentially used in psychotherapeutic treatments. Catalyzes the N-methylation of many substrates, including 3-methoxytyramine, 5-hydroxy-3,4-dimethoxyphenethylamine, 4-hydroxy-3,5-dimethoxyphenethylamine, tyramine and mescaline. This is N-methyltransferase from Lophophora williamsii (Peyote).